The chain runs to 199 residues: Carbon disulfide hydrolase (199 aa).

Residues Cys36, His91, and Cys94 each coordinate Zn(2+).

This sequence belongs to the beta-class carbonic anhydrase family. As to quaternary structure, exists as both octamers and hexadecamers in solution. The hexadecameric homooligomer may form a catenane, through interactions of two interlocked octameric rings. Requires Zn(2+) as cofactor.

It carries out the reaction carbon disulfide + 2 H2O = 2 hydrogen sulfide + CO2 + 2 H(+). The protein operates within sulfur metabolism; hydrogen sulfide biosynthesis. In terms of biological role, catalyzes the conversion of carbon disulfide into hydrogen sulfide and carbon dioxide, with carbonyl sulfide as an intermediate. Likely plays a key role in sulfur metabolism that allows A.thiooxidans G8 to grow on carbon disulfide as the main carbon and energy source. Does not show carbonic anhydrase activity (hydration of CO(2) to carbonate). This Acidithiobacillus thiooxidans (Thiobacillus thiooxidans) protein is Carbon disulfide hydrolase.